The primary structure comprises 446 residues: N-succinylarginine dihydrolase (446 aa).

Residues 19 to 28 (AGLSFGNEAS), N110, and 137 to 138 (HR) each bind substrate. E174 is a catalytic residue. A substrate-binding site is contributed by R213. Residue H249 is part of the active site. D251 and N364 together coordinate substrate. The Nucleophile role is filled by C370.

This sequence belongs to the succinylarginine dihydrolase family. As to quaternary structure, homodimer.

It catalyses the reaction N(2)-succinyl-L-arginine + 2 H2O + 2 H(+) = N(2)-succinyl-L-ornithine + 2 NH4(+) + CO2. The protein operates within amino-acid degradation; L-arginine degradation via AST pathway; L-glutamate and succinate from L-arginine: step 2/5. Catalyzes the hydrolysis of N(2)-succinylarginine into N(2)-succinylornithine, ammonia and CO(2). The polypeptide is N-succinylarginine dihydrolase (Serratia proteamaculans (strain 568)).